The following is a 154-amino-acid chain: Ribonuclease H (154 aa).

The region spanning methionine 1–serine 142 is the RNase H type-1 domain. Mg(2+) contacts are provided by aspartate 9, glutamate 47, aspartate 69, and aspartate 134.

The protein belongs to the RNase H family. In terms of assembly, monomer. Mg(2+) serves as cofactor.

It is found in the cytoplasm. The enzyme catalyses Endonucleolytic cleavage to 5'-phosphomonoester.. Functionally, endonuclease that specifically degrades the RNA of RNA-DNA hybrids. This chain is Ribonuclease H, found in Oleidesulfovibrio alaskensis (strain ATCC BAA-1058 / DSM 17464 / G20) (Desulfovibrio alaskensis).